Here is a 239-residue protein sequence, read N- to C-terminus: Probable 2-phosphosulfolactate phosphatase (239 aa).

Belongs to the ComB family. It depends on Mg(2+) as a cofactor.

It carries out the reaction (2R)-O-phospho-3-sulfolactate + H2O = (2R)-3-sulfolactate + phosphate. The sequence is that of Probable 2-phosphosulfolactate phosphatase from Clostridium botulinum (strain Okra / Type B1).